A 567-amino-acid chain; its full sequence is Phosphoglucomutase-like protein 5 (567 aa).

Residues 1–26 are disordered; the sequence is MEGSPIPVLTVPTAPYEDQRPTGGGG. Thr120 is subject to Phosphothreonine. At Ser122 the chain carries Phosphoserine.

This sequence belongs to the phosphohexose mutase family. In terms of assembly, interacts with DMD/dystrophin; the interaction is direct. Interacts with UTRN/utrophin.

The protein localises to the cell junction. The protein resides in the adherens junction. Its subcellular location is the cytoplasm. It localises to the cytoskeleton. It is found in the cell membrane. The protein localises to the sarcolemma. Component of adherens-type cell-cell and cell-matrix junctions. Has no phosphoglucomutase activity in vitro. The chain is Phosphoglucomutase-like protein 5 from Mus musculus (Mouse).